We begin with the raw amino-acid sequence, 344 residues long: Meiotic expression up-regulated protein 26 (344 aa).

Its subcellular location is the nucleus. This Schizosaccharomyces pombe (strain 972 / ATCC 24843) (Fission yeast) protein is Meiotic expression up-regulated protein 26 (meu26).